Consider the following 254-residue polypeptide: NAD-dependent protein deacylase 2 (254 aa).

The Deacetylase sirtuin-type domain occupies 1–254 (MDEHSIMQAV…LPALVRRLGV (254 aa)). 24–44 (GAGMSADSGLETYRDPETGVW) is an NAD(+) binding site. Substrate contacts are provided by tyrosine 69 and arginine 72. 105-108 (QNID) lines the NAD(+) pocket. Histidine 123 acts as the Proton acceptor in catalysis. The Zn(2+) site is built by cysteine 131, cysteine 134, cysteine 157, and cysteine 160. Residues 197–199 (GTS) and alanine 241 each bind NAD(+).

The protein belongs to the sirtuin family. Class III subfamily. Zn(2+) serves as cofactor.

It localises to the cytoplasm. The enzyme catalyses N(6)-acetyl-L-lysyl-[protein] + NAD(+) + H2O = 2''-O-acetyl-ADP-D-ribose + nicotinamide + L-lysyl-[protein]. The catalysed reaction is N(6)-succinyl-L-lysyl-[protein] + NAD(+) + H2O = 2''-O-succinyl-ADP-D-ribose + nicotinamide + L-lysyl-[protein]. Functionally, NAD-dependent lysine deacetylase and desuccinylase that specifically removes acetyl and succinyl groups on target proteins. Modulates the activities of several proteins which are inactive in their acylated form. The polypeptide is NAD-dependent protein deacylase 2 (Corynebacterium efficiens (strain DSM 44549 / YS-314 / AJ 12310 / JCM 11189 / NBRC 100395)).